A 200-amino-acid polypeptide reads, in one-letter code: UPF0488 protein CG14286 (200 aa).

Disordered regions lie at residues 1–28 and 139–174; these read MHKRRTAKSINKPPPIQGAIKKPTPVAE and KDFRFNFPSPAEDTSSKEPQPVQDFDPSSLQPAEAG.

Belongs to the UPF0488 family.

This is UPF0488 protein CG14286 from Drosophila melanogaster (Fruit fly).